Here is a 328-residue protein sequence, read N- to C-terminus: Serine/threonine protein kinase RdoA (328 aa).

Catalysis depends on D201, which acts as the Proton acceptor. Mg(2+)-binding residues include N206 and D217. Residue D217 is part of the active site.

The protein belongs to the SrkA/RdoA protein kinase family. As to quaternary structure, monomer. The cofactor is Mg(2+).

Its subcellular location is the cytoplasm. The enzyme catalyses L-seryl-[protein] + ATP = O-phospho-L-seryl-[protein] + ADP + H(+). It carries out the reaction L-threonyl-[protein] + ATP = O-phospho-L-threonyl-[protein] + ADP + H(+). A protein kinase that (auto)phosphorylates on Ser and Thr residues, probably involved in the extracytoplasmic stress response. Probably acts to suppress the effects of stress linked to accumulation of reactive oxygen species. This Salmonella typhimurium (strain LT2 / SGSC1412 / ATCC 700720) protein is Serine/threonine protein kinase RdoA.